Reading from the N-terminus, the 118-residue chain is C-type natriuretic peptide 2 (118 aa).

The signal sequence occupies residues Met-1–Ala-22. The propeptide occupies Lys-23–Lys-96. A disulfide bridge connects residues Cys-102 and Cys-118.

The protein belongs to the natriuretic peptide family.

The protein resides in the secreted. Exhibits natriuretic and vasodepressor activity. Has a cGMP-stimulating activity. The protein is C-type natriuretic peptide 2 of Aquarana catesbeiana (American bullfrog).